The sequence spans 457 residues: Oxygen-independent coproporphyrinogen III oxidase (457 aa).

One can recognise a Radical SAM core domain in the interval 47-279 (LKNPMPLSLY…EILESLISFL (233 aa)). Y56 is an S-adenosyl-L-methionine binding site. The [4Fe-4S] cluster site is built by C62 and C66. Residue F68 participates in S-adenosyl-L-methionine binding. C69 lines the [4Fe-4S] cluster pocket. Residues G113, 114-115 (GT), E147, Q174, R186, D211, A245, and I331 contribute to the S-adenosyl-L-methionine site.

It belongs to the anaerobic coproporphyrinogen-III oxidase family. Monomer. [4Fe-4S] cluster is required as a cofactor.

Its subcellular location is the cytoplasm. It carries out the reaction coproporphyrinogen III + 2 S-adenosyl-L-methionine = protoporphyrinogen IX + 2 5'-deoxyadenosine + 2 L-methionine + 2 CO2. It participates in porphyrin-containing compound metabolism; protoporphyrin-IX biosynthesis; protoporphyrinogen-IX from coproporphyrinogen-III (AdoMet route): step 1/1. Involved in the heme biosynthesis. Catalyzes the anaerobic oxidative decarboxylation of propionate groups of rings A and B of coproporphyrinogen III to yield the vinyl groups in protoporphyrinogen IX. The sequence is that of Oxygen-independent coproporphyrinogen III oxidase (hemN) from Helicobacter pylori (strain ATCC 700392 / 26695) (Campylobacter pylori).